The sequence spans 379 residues: L-lactate dehydrogenase (379 aa).

The 379-residue stretch at 1 to 379 folds into the FMN hydroxy acid dehydrogenase domain; that stretch reads MIISSSTDYR…ISPDSLVRGL (379 aa). Position 24 (Tyr24) interacts with substrate. FMN is bound by residues Ser106 and Gln127. Tyr129 is a binding site for substrate. Thr155 is an FMN binding site. Substrate is bound at residue Arg164. An FMN-binding site is contributed by Lys251. The active-site Proton acceptor is His275. Arg278 contacts substrate. 306 to 330 serves as a coordination point for FMN; sequence DSGIRSGLDVVRMIAQGADGVLIGR.

The protein belongs to the FMN-dependent alpha-hydroxy acid dehydrogenase family. The cofactor is FMN.

It localises to the cell inner membrane. It catalyses the reaction (S)-lactate + A = pyruvate + AH2. In terms of biological role, catalyzes the conversion of L-lactate to pyruvate. Is coupled to the respiratory chain. In Allorhizobium ampelinum (strain ATCC BAA-846 / DSM 112012 / S4) (Agrobacterium vitis (strain S4)), this protein is L-lactate dehydrogenase.